The sequence spans 208 residues: Imidazoleglycerol-phosphate dehydratase (208 aa).

Belongs to the imidazoleglycerol-phosphate dehydratase family.

The protein localises to the cytoplasm. The enzyme catalyses D-erythro-1-(imidazol-4-yl)glycerol 3-phosphate = 3-(imidazol-4-yl)-2-oxopropyl phosphate + H2O. The protein operates within amino-acid biosynthesis; L-histidine biosynthesis; L-histidine from 5-phospho-alpha-D-ribose 1-diphosphate: step 6/9. This is Imidazoleglycerol-phosphate dehydratase from Symbiobacterium thermophilum (strain DSM 24528 / JCM 14929 / IAM 14863 / T).